A 252-amino-acid polypeptide reads, in one-letter code: D-aminoacyl-tRNA deacylase (252 aa).

It belongs to the DtdA deacylase family. As to quaternary structure, monomer. It depends on Zn(2+) as a cofactor.

It carries out the reaction a D-aminoacyl-tRNA + H2O = a tRNA + a D-alpha-amino acid + H(+). The enzyme catalyses glycyl-tRNA(Ala) + H2O = tRNA(Ala) + glycine + H(+). Its function is as follows. D-aminoacyl-tRNA deacylase with broad substrate specificity. By recycling D-aminoacyl-tRNA to D-amino acids and free tRNA molecules, this enzyme counteracts the toxicity associated with the formation of D-aminoacyl-tRNA entities in vivo. The protein is D-aminoacyl-tRNA deacylase of Pyrobaculum islandicum (strain DSM 4184 / JCM 9189 / GEO3).